The primary structure comprises 640 residues: MVQSELQLQPRAGGRAEAASWGDRGNDKGGLGNPDMPSVSPGPQRPPKLSSLAYDSPPDYLQTVSHPEVYRVLFDYQPEAPDELALRRGDVVKVLSKTTEDKGWWEGECQGRRGVFPDNFVLPPPPIKKLVPRKVVSRESAPIKEPKKLMPKTSLPTVKKLATATTGPSKAKTSRTPSRDSQKLTSRDSGPNGGFQSGGSYHPGRKRSKTQTPQQRSVSSQEEEHSSPVKAPSVKRTPMPDKTATPERPPAPENAPSSKKIPAPDKVPSPEKTLTLGDKASIPGNSTSGKIPAPDKVPTPEKMVTPEDKASIPENSIIPEETLTVDKPSTPERVFSVEESPALEAPPMDKVPNPKMAPLGDEAPTLEKVLTPELSEEEVSTRDDIQFHHFSSEEALQKVKYFVAKEDPSSQEEAHTPEAPPPQPPSSERCLGEMKCTLVRGDSSPRQAELKSGPASRPALEKPHPHEEATTLPEEAPSNDERTPEEEAPPNEQRPLREEVLPKEGVASKEEVTLKEELPPKEEVAPKEEVPPIERAFAQKTRPIKPPPDSQETLALPSLVPQNYTENKNEGVDVTSLRGEVESLRRALELMEVQLERKLTDIWEELKSEKEQRRRLEVQVMQGTQKSQTPRVIHTQTQTY.

The interval 1-60 (MVQSELQLQPRAGGRAEAASWGDRGNDKGGLGNPDMPSVSPGPQRPPKLSSLAYDSPPDY) is disordered. One can recognise an SH3 domain in the interval 65-126 (SHPEVYRVLF…PDNFVLPPPP (62 aa)). Disordered regions lie at residues 133 to 361 (RKVV…PLGD), 401 to 551 (YFVA…PDSQ), and 618 to 640 (VQVM…TQTY). Positions 177–186 (PSRDSQKLTS) are enriched in basic and acidic residues. The span at 210 to 220 (TQTPQQRSVSS) shows a compositional bias: polar residues. 3 stretches are compositionally biased toward basic and acidic residues: residues 401–416 (YFVA…EAHT), 459–469 (ALEKPHPHEEA), and 494–532 (RPLR…EVPP). The stretch at 572–626 (VDVTSLRGEVESLRRALELMEVQLERKLTDIWEELKSEKEQRRRLEVQVMQGTQK) forms a coiled coil. The segment covering 621–640 (MQGTQKSQTPRVIHTQTQTY) has biased composition (polar residues).

This is SH3 domain-containing protein 21 (SH3D21) from Homo sapiens (Human).